A 445-amino-acid polypeptide reads, in one-letter code: Putative serpin-Z5 (445 aa).

The tract at residues 356 to 380 (GTEAAASAINMVCGMSMTPEPRPVP) is RCL.

Belongs to the serpin family.

In terms of biological role, probable serine protease inhibitor. In Oryza sativa subsp. japonica (Rice), this protein is Putative serpin-Z5.